A 446-amino-acid chain; its full sequence is Glutamyl-tRNA reductase (446 aa).

Residues 49–52 (TCNR), Ser-109, 114–116 (ETQ), and Gln-120 contribute to the substrate site. Cys-50 acts as the Nucleophile in catalysis. 189–194 (GAGKMG) serves as a coordination point for NADP(+).

This sequence belongs to the glutamyl-tRNA reductase family. Homodimer.

The catalysed reaction is (S)-4-amino-5-oxopentanoate + tRNA(Glu) + NADP(+) = L-glutamyl-tRNA(Glu) + NADPH + H(+). Its pathway is porphyrin-containing compound metabolism; protoporphyrin-IX biosynthesis; 5-aminolevulinate from L-glutamyl-tRNA(Glu): step 1/2. In terms of biological role, catalyzes the NADPH-dependent reduction of glutamyl-tRNA(Glu) to glutamate 1-semialdehyde (GSA). The sequence is that of Glutamyl-tRNA reductase from Priestia megaterium (Bacillus megaterium).